The chain runs to 379 residues: Succinyl-diaminopimelate desuccinylase (379 aa).

His-70 is a binding site for Zn(2+). Asp-72 is an active-site residue. Asp-103 is a Zn(2+) binding site. The active-site Proton acceptor is Glu-137. Residues Glu-138, Glu-166, and His-352 each coordinate Zn(2+).

Belongs to the peptidase M20A family. DapE subfamily. As to quaternary structure, homodimer. Zn(2+) is required as a cofactor. Requires Co(2+) as cofactor.

The enzyme catalyses N-succinyl-(2S,6S)-2,6-diaminopimelate + H2O = (2S,6S)-2,6-diaminopimelate + succinate. The protein operates within amino-acid biosynthesis; L-lysine biosynthesis via DAP pathway; LL-2,6-diaminopimelate from (S)-tetrahydrodipicolinate (succinylase route): step 3/3. Catalyzes the hydrolysis of N-succinyl-L,L-diaminopimelic acid (SDAP), forming succinate and LL-2,6-diaminopimelate (DAP), an intermediate involved in the bacterial biosynthesis of lysine and meso-diaminopimelic acid, an essential component of bacterial cell walls. This Shewanella baltica (strain OS223) protein is Succinyl-diaminopimelate desuccinylase.